The chain runs to 236 residues: Uridylate kinase (236 aa).

12–15 (KLSG) lines the ATP pocket. Residues 20-25 (GEKGFG) form an involved in allosteric activation by GTP region. Glycine 54 contributes to the UMP binding site. 2 residues coordinate ATP: glycine 55 and arginine 59. UMP is bound by residues aspartate 72 and 133–140 (TGNPYFST). ATP contacts are provided by asparagine 161, tyrosine 166, and aspartate 169.

It belongs to the UMP kinase family. Homohexamer.

It is found in the cytoplasm. It catalyses the reaction UMP + ATP = UDP + ADP. It participates in pyrimidine metabolism; CTP biosynthesis via de novo pathway; UDP from UMP (UMPK route): step 1/1. Its activity is regulated as follows. Allosterically activated by GTP. Inhibited by UTP. Functionally, catalyzes the reversible phosphorylation of UMP to UDP. This chain is Uridylate kinase, found in Alkaliphilus metalliredigens (strain QYMF).